The primary structure comprises 267 residues: MKLLAILLVLPALCFGQRHEGPGMGPGMGPGMGPGMGPGMGPGMGPGMGPGMGPGQGQGQGQGQGQVGGSKCKGGWFLIGQQCFKMMSRALKWNDAELMCEQNAPCGTPVLGGVMTIPDIQTSNAVINHLKSLSSTAMAIDIPFWTGLHNKWNALLERYEGWKWPAGWSTTQQPLRFVNWAPREPNNQLLDQQHSYCARMNRMGQWYVVRCDEPMYFACSMPVSPPLVGGANTNPGMGMLVENPAPIINGYTEFESGLLMRNGVGGP.

A signal peptide spans 1–16; the sequence is MKLLAILLVLPALCFG. Residues 20–64 form an 11 X 4 AA tandem repeats of G-[PQ]-G-[MQ] region; that stretch reads EGPGMGPGMGPGMGPGMGPGMGPGMGPGMGPGMGPGQGQGQGQGQ. A run of 11 repeats spans residues 21–24, 25–28, 29–32, 33–36, 37–40, 41–44, 45–48, 49–52, 53–56, 57–60, and 61–64. Positions 44–68 are disordered; the sequence is MGPGMGPGMGPGQGQGQGQGQGQVG. The C-type lectin domain occupies 79-220; it reads IGQQCFKMMS…CDEPMYFACS (142 aa). Disulfide bonds link cysteine 100/cysteine 219 and cysteine 197/cysteine 211.

Expressed specifically in the micromere/primary mesenchyme cells (PMC) lineage. Produced uniformly and exclusively by PMCs through the early prism stage and this specificity is further restricted during skeletogenesis to a subpopulation of PMCs associated with the growing tips of the spicules.

It localises to the secreted. In terms of biological role, may play a role in the regulation or execution of skeletal growth. The chain is 27 kDa primary mesenchyme-specific spicule protein (PM27) from Strongylocentrotus purpuratus (Purple sea urchin).